The sequence spans 249 residues: Uridylate kinase (249 aa).

Residue 19–22 (KLSG) coordinates ATP. Residue G61 participates in UMP binding. G62 and R66 together coordinate ATP. UMP-binding positions include D81 and 142–149 (TGNPYFTT). ATP-binding residues include T169, Y175, and D178.

It belongs to the UMP kinase family. In terms of assembly, homohexamer.

The protein resides in the cytoplasm. It catalyses the reaction UMP + ATP = UDP + ADP. The protein operates within pyrimidine metabolism; CTP biosynthesis via de novo pathway; UDP from UMP (UMPK route): step 1/1. Inhibited by UTP. Functionally, catalyzes the reversible phosphorylation of UMP to UDP. The polypeptide is Uridylate kinase (Anaeromyxobacter sp. (strain Fw109-5)).